Reading from the N-terminus, the 105-residue chain is Small ribosomal subunit protein uS10 (105 aa).

The protein belongs to the universal ribosomal protein uS10 family. In terms of assembly, part of the 30S ribosomal subunit.

Functionally, involved in the binding of tRNA to the ribosomes. This Thermus thermophilus (strain ATCC BAA-163 / DSM 7039 / HB27) protein is Small ribosomal subunit protein uS10.